Reading from the N-terminus, the 101-residue chain is Small ribosomal subunit protein bS18c (101 aa).

Basic residues predominate over residues 1–19 (MDKSKQLFRKSKRSFRRRL). The interval 1-23 (MDKSKQLFRKSKRSFRRRLPPIG) is disordered.

The protein belongs to the bacterial ribosomal protein bS18 family. As to quaternary structure, part of the 30S ribosomal subunit.

It localises to the plastid. Its subcellular location is the chloroplast. In Acorus calamus (Sweet flag), this protein is Small ribosomal subunit protein bS18c.